Reading from the N-terminus, the 319-residue chain is tRNA uridine(34) hydroxylase (319 aa).

Positions 127-221 (KQEDTVIIDA…YGKDPEVQGE (95 aa)) constitute a Rhodanese domain. C181 (cysteine persulfide intermediate) is an active-site residue.

This sequence belongs to the TrhO family.

The enzyme catalyses uridine(34) in tRNA + AH2 + O2 = 5-hydroxyuridine(34) in tRNA + A + H2O. Its function is as follows. Catalyzes oxygen-dependent 5-hydroxyuridine (ho5U) modification at position 34 in tRNAs. The sequence is that of tRNA uridine(34) hydroxylase from Bacillus cereus (strain ATCC 10987 / NRS 248).